Consider the following 378-residue polypeptide: Putative dioxygenase VC_1345 (378 aa).

His-288, Asp-294, and His-324 together coordinate Fe cation.

The protein belongs to the homogentisate dioxygenase family. It depends on Fe cation as a cofactor.

The protein is Putative dioxygenase VC_1345 of Vibrio cholerae serotype O1 (strain ATCC 39315 / El Tor Inaba N16961).